The following is a 161-amino-acid chain: Sterile alpha motif domain-containing protein 12 (161 aa).

Residues 44-64 are disordered; the sequence is QKVPDQKGTPKRLQGEAETAK. Positions 77–143 constitute an SAM domain; the sequence is WTQQDVCKWL…LQQVLQLKVR (67 aa).

The protein is Sterile alpha motif domain-containing protein 12 (Samd12) of Mus musculus (Mouse).